The primary structure comprises 476 residues: Stromelysin-2 (476 aa).

The first 17 residues, 1 to 17, serve as a signal peptide directing secretion; sequence MEPLAILVLLCFPICSA. A propeptide spans 18-99 (activation peptide); that stretch reads YPLHGAVRQD…PRCGVPDVGG (82 aa). The Cysteine switch motif lies at 90–97; the sequence is PRCGVPDV. The Zn(2+) site is built by cysteine 92, histidine 168, aspartate 170, histidine 183, histidine 196, and histidine 218. Residue glutamate 219 is part of the active site. Zn(2+) is bound by residues histidine 222 and histidine 228. Hemopexin repeat units follow at residues 286–335, 336–382, 384–432, and 433–476; these read PVKC…WPSL, PSGL…GFPP, VKKI…FPGI, and EPQV…WLLC. Cysteine 289 and cysteine 476 are joined by a disulfide.

Belongs to the peptidase M10A family. The cofactor is Zn(2+). Requires Ca(2+) as cofactor.

The protein resides in the secreted. It localises to the extracellular space. Its subcellular location is the extracellular matrix. It carries out the reaction Similar to stromelysin 1, but action on collagen types III, IV and V is weak.. In terms of biological role, can degrade fibronectin, gelatins of type I, III, IV, and V; weakly collagens III, IV, and V. Activates procollagenase. This chain is Stromelysin-2 (Mmp10), found in Rattus norvegicus (Rat).